A 200-amino-acid chain; its full sequence is COMM domain-containing protein 7 (200 aa).

In terms of domain architecture, COMM spans 133–200 (QLIDMEWRFG…RVRASMECLS (68 aa)).

This sequence belongs to the COMM domain-containing protein 7 family. As to quaternary structure, component of the commander complex consisting of the CCC subcomplex and the retriever subcomplex. Component of the CCC (COMMD/CCDC22/CCDC93) subcomplex consisting of COMMD1, COMMD2, COMMD3, COMMD4, COMMD5, COMMD6, COMMD7, COMMD8, COMMD9, COMMD10, CCDC22 and CCDC93; within the complex forms a heterodimer with COMMD9. Interacts with RELA. Interacts with CCDC22, CCDC93, SCNN1B, CUL7.

Its subcellular location is the cytoplasmic vesicle. Scaffold protein in the commander complex that is essential for endosomal recycling of transmembrane cargos; the commander complex is composed of the CCC subcomplex and the retriever subcomplex. May modulate activity of cullin-RING E3 ubiquitin ligase (CRL) complexes. Associates with the NF-kappa-B complex and suppresses its transcriptional activity. The protein is COMM domain-containing protein 7 (Commd7) of Mus musculus (Mouse).